A 37-amino-acid chain; its full sequence is Large ribosomal subunit protein bL36 (37 aa).

Belongs to the bacterial ribosomal protein bL36 family.

In Alkalilimnicola ehrlichii (strain ATCC BAA-1101 / DSM 17681 / MLHE-1), this protein is Large ribosomal subunit protein bL36.